A 307-amino-acid chain; its full sequence is Serine/threonine-protein phosphatase 4 catalytic subunit (307 aa).

D54, H56, D82, and N114 together coordinate Mn(2+). H115 serves as the catalytic Proton donor. Mn(2+) is bound by residues H164 and H238. Position 307 is a leucine methyl ester (L307).

Belongs to the PPP phosphatase family. PP-4 (PP-X) subfamily. As to quaternary structure, serine/threonine-protein phosphatase 4 (PP4) occurs in different assemblies of the catalytic and one or more regulatory subunits. Probably part of a PP4 PPP4C-PPP4R2-PPP4R3 complex containing Pp4-19C, PPP4R2r and flfl. Interacts with Ptpa; thereby mediating basal localization of the Miranda (Mira) complex; probably by dephosphorylation of Mira. Mn(2+) serves as cofactor. Post-translationally, reversibly methyl esterified on Leu-307 by leucine carboxyl methyltransferase 1 (LCMT1) and protein phosphatase methylesterase 1 (PPME1). Carboxyl methylation influences the affinity of the catalytic subunit for the different regulatory subunits, thereby modulating the PP2A holoenzyme's substrate specificity, enzyme activity and cellular localization.

The protein resides in the cytoplasm. It localises to the nucleus. It is found in the cytoskeleton. The protein localises to the microtubule organizing center. Its subcellular location is the centrosome. The enzyme catalyses O-phospho-L-seryl-[protein] + H2O = L-seryl-[protein] + phosphate. It catalyses the reaction O-phospho-L-threonyl-[protein] + H2O = L-threonyl-[protein] + phosphate. Functionally, protein phosphatase that regulates many processes such as microtubule organization at centrosomes. The probable PP4 complex Pp4-19C-PPP4R2r-flfl (PPP4C-PPP4R2-PPP4R3) is required to prevent caspase-induced cell death (in vitro). The protein is Serine/threonine-protein phosphatase 4 catalytic subunit (Pp4-19C) of Drosophila melanogaster (Fruit fly).